Here is a 194-residue protein sequence, read N- to C-terminus: Large ribosomal subunit protein bL9 (194 aa).

The protein belongs to the bacterial ribosomal protein bL9 family.

Binds to the 23S rRNA. This Paracoccus denitrificans (strain Pd 1222) protein is Large ribosomal subunit protein bL9.